The sequence spans 185 residues: Elongation factor P 1 (185 aa).

It belongs to the elongation factor P family.

It is found in the cytoplasm. The protein operates within protein biosynthesis; polypeptide chain elongation. Involved in peptide bond synthesis. Stimulates efficient translation and peptide-bond synthesis on native or reconstituted 70S ribosomes in vitro. Probably functions indirectly by altering the affinity of the ribosome for aminoacyl-tRNA, thus increasing their reactivity as acceptors for peptidyl transferase. The sequence is that of Elongation factor P 1 (efp1) from Chlamydia trachomatis serovar D (strain ATCC VR-885 / DSM 19411 / UW-3/Cx).